A 77-amino-acid polypeptide reads, in one-letter code: Translation initiation factor IF-1, chloroplastic (77 aa).

The region spanning Met1–Arg71 is the S1-like domain.

Belongs to the IF-1 family. As to quaternary structure, component of the 30S ribosomal translation pre-initiation complex which assembles on the 30S ribosome in the order IF-2 and IF-3, IF-1 and N-formylmethionyl-tRNA(fMet); mRNA recruitment can occur at any time during PIC assembly.

The protein resides in the plastid. The protein localises to the chloroplast. In terms of biological role, one of the essential components for the initiation of protein synthesis. Stabilizes the binding of IF-2 and IF-3 on the 30S subunit to which N-formylmethionyl-tRNA(fMet) subsequently binds. Helps modulate mRNA selection, yielding the 30S pre-initiation complex (PIC). Upon addition of the 50S ribosomal subunit IF-1, IF-2 and IF-3 are released leaving the mature 70S translation initiation complex. In Antirrhinum majus (Garden snapdragon), this protein is Translation initiation factor IF-1, chloroplastic.